The chain runs to 202 residues: Probable chemoreceptor glutamine deamidase CheD 2 (202 aa).

It belongs to the CheD family.

It catalyses the reaction L-glutaminyl-[protein] + H2O = L-glutamyl-[protein] + NH4(+). In terms of biological role, probably deamidates glutamine residues to glutamate on methyl-accepting chemotaxis receptors (MCPs), playing an important role in chemotaxis. This is Probable chemoreceptor glutamine deamidase CheD 2 from Shewanella oneidensis (strain ATCC 700550 / JCM 31522 / CIP 106686 / LMG 19005 / NCIMB 14063 / MR-1).